The primary structure comprises 145 residues: Glycine-rich protein (145 aa).

An N-terminal signal peptide occupies residues Met1 to Ala19.

As to expression, component of the acid-insoluble and acid-soluble organic matrix of calcified layers of the shell (at protein level).

Its subcellular location is the secreted. In Lottia gigantea (Giant owl limpet), this protein is Glycine-rich protein.